Here is a 121-residue protein sequence, read N- to C-terminus: Holin-like protein CidA (121 aa).

The next 4 membrane-spanning stretches (helical) occupy residues 3-23 (WWKLSGQILLLFCFAWTGEWI), 30-50 (PVPGSIIGIFLLLISLKFNLV), 58-78 (GADFLLKELILFFIPSAVAVI), and 89-109 (IDLILIIMISTLCVTLVTGLL).

This sequence belongs to the CidA/LrgA family. CidA subfamily.

It localises to the cell membrane. Functionally, increases the activity of extracellular murein hydrolases possibly by mediating their export via hole formation. Inhibited by the antiholin-like proteins LrgAB. In an unstressed cell, the LrgAB products probably inhibit the function of the CidA protein. When a cell is stressed by the addition of antibiotics or by other factors in the environment, CidA possibly oligomerizes within the bacterial cell membrane, creating lesions that disrupt the proton motive force, which in turn results in loss of cell viability. These lesions are also hypothesized to regulate the subsequent cell lysis by either allowing the murein hydrolases access to the cell wall substrate and/or regulating their activity by a possible change in the cell wall pH that results from loss of membrane potential. This chain is Holin-like protein CidA, found in Bacillus cereus (strain ATCC 10987 / NRS 248).